The primary structure comprises 75 residues: MLCLPVFIILLLLASPAAPNPLEKRIQSDLIRAALEDADMKTDEREIVNIIDSISDVAKQICCEITVQCCVLDEE.

The signal sequence occupies residues 1–19; that stretch reads MLCLPVFIILLLLASPAAP. A propeptide spanning residues 20 to 59 is cleaved from the precursor; it reads NPLEKRIQSDLIRAALEDADMKTDEREIVNIIDSISDVAK. Position 60 is a pyrrolidone carboxylic acid (Gln-60).

The protein belongs to the conotoxin T superfamily. Post-translationally, contains 2 disulfide bonds that can be either 'C1-C3, C2-C4' or 'C1-C4, C2-C3', since these disulfide connectivities have been observed for conotoxins with cysteine framework V (for examples, see AC P0DQQ7 and AC P81755). In terms of tissue distribution, expressed by the venom duct.

It localises to the secreted. The chain is Conotoxin Vn5.5 from Conus ventricosus (Mediterranean cone).